A 189-amino-acid chain; its full sequence is Probable nicotinate-nucleotide adenylyltransferase (189 aa).

This sequence belongs to the NadD family.

The catalysed reaction is nicotinate beta-D-ribonucleotide + ATP + H(+) = deamido-NAD(+) + diphosphate. The protein operates within cofactor biosynthesis; NAD(+) biosynthesis; deamido-NAD(+) from nicotinate D-ribonucleotide: step 1/1. Its function is as follows. Catalyzes the reversible adenylation of nicotinate mononucleotide (NaMN) to nicotinic acid adenine dinucleotide (NaAD). In Bacillus cereus (strain Q1), this protein is Probable nicotinate-nucleotide adenylyltransferase.